Reading from the N-terminus, the 644-residue chain is Chaperone protein DnaK (644 aa).

T199 carries the phosphothreonine; by autocatalysis modification. Positions 589 to 644 (QALAEASHKLAEKMYSQGQGPQAGPGEEPSGQSGGTEKPVEGEVVDAEFEEVKNKK) are disordered. Positions 604–619 (SQGQGPQAGPGEEPSG) are enriched in low complexity.

Belongs to the heat shock protein 70 family.

Its function is as follows. Acts as a chaperone. The polypeptide is Chaperone protein DnaK (Nitrosospira multiformis (strain ATCC 25196 / NCIMB 11849 / C 71)).